A 387-amino-acid chain; its full sequence is O-methyltransferase fsr2 (387 aa).

Position 231 (Asp231) interacts with S-adenosyl-L-methionine. His280 acts as the Proton acceptor in catalysis.

Belongs to the class I-like SAM-binding methyltransferase superfamily. Cation-independent O-methyltransferase family. COMT subfamily.

It participates in polyketide biosynthesis. Functionally, O-methyltransferase; part of the gene cluster that mediates the biosynthesis of fusarubins, highly pigmented naphthoquinones responsible for the coloration of the fruiting bodies. The non-reducing polyketide synthase FSR1 is responsible for the condensation of seven acetyl-CoA units to yield a haptaketide. After rings A and B are formed by aldol-type cyclization, the PKS-derived product is released as 6-O-demethylfusarubinaldehyde. Then, two hydroxyl groups at C-5 and C-10 are incorporated by FSR3, and simultaneously hydroxyl groups at C-6 and C-8 are methylated by FSR2. The aldehyde is, on the one hand, reduced by FSR3 to 8-O-methylfusarubin alcohol, which equilibrates mainly with 8-O-methylfusarubin and only small amounts of 8-O-methylnectriafurone. On the other hand, the aldehyde can be oxidized to form 8-O-methylfusarubinic acid, a reaction driven by FSR3 equilibrating with 8-O-methylfusarubinlactone, finally resulting in 8-O-methylanhydrofusarubinlactol after a further reduction step and loss of water. 8-O-Methylfusarubinic acid can also undergo decarboxylation, resulting in 8-O-methyl-13-hydroxynorjavanicin after another hydroxylation step at C-13. Both steps are most likely also accomplished by FSR3. No enzymatic function has been determined so far for either FSR4 and FSR5. Their deletion does not alter the product spectrum, but the possibility that they catalyze specific enzymatic steps during perithecium development cannot be ruled out. FSR4 might possess a regulatory function in the biosynthesis of fusarubins. The sequence is that of O-methyltransferase fsr2 from Gibberella fujikuroi (strain CBS 195.34 / IMI 58289 / NRRL A-6831) (Bakanae and foot rot disease fungus).